The sequence spans 157 residues: Protein Smg homolog (157 aa).

The protein belongs to the Smg family.

The sequence is that of Protein Smg homolog from Pseudoalteromonas translucida (strain TAC 125).